We begin with the raw amino-acid sequence, 361 residues long: tRNA pseudouridine synthase D (361 aa).

D76 acts as the Nucleophile in catalysis. Residues 151–318 (GIPNYFGYQR…EQGSRRLAWI (168 aa)) form the TRUD domain.

Belongs to the pseudouridine synthase TruD family.

It carries out the reaction uridine(13) in tRNA = pseudouridine(13) in tRNA. Functionally, responsible for synthesis of pseudouridine from uracil-13 in transfer RNAs. This chain is tRNA pseudouridine synthase D, found in Wolinella succinogenes (strain ATCC 29543 / DSM 1740 / CCUG 13145 / JCM 31913 / LMG 7466 / NCTC 11488 / FDC 602W) (Vibrio succinogenes).